Here is a 412-residue protein sequence, read N- to C-terminus: Zinc finger protein 260 (412 aa).

13 C2H2-type zinc fingers span residues 27–49 (YECN…KKMH), 55–77 (HECT…LRSH), 83–105 (YKCN…QKHH), 136–158 (YACK…EKIH), 164–186 (FECN…QNIH), 192–214 (FKCS…QRIH), 220–242 (YECK…QRSH), 248–270 (YTCK…EKIH), 276–298 (YKCN…HNIH), 304–326 (YECN…VRIH), 332–354 (YECK…MRSH), 360–382 (YGCN…MRIH), and 388–412 (YQCS…IHTH).

Belongs to the krueppel C2H2-type zinc-finger protein family. Binds DNA. Interacts with GATA4.

It localises to the nucleus. Its function is as follows. Transcription factor that acts as a cardiac regulator and an effector of alpha1-adrenergic signaling. Binds to PE response elements (PERE) present in the promoter of genes such as ANF/NPPA and acts as a direct transcriptional activator of NPPA. Also acts as a cofactor with GATA4, a key cardiac regulator. The protein is Zinc finger protein 260 (ZNF260) of Homo sapiens (Human).